A 676-amino-acid chain; its full sequence is F420-dependent formate dehydrogenase 2 subunit alpha (676 aa).

One can recognise a 4Fe-4S Mo/W bis-MGD-type domain in the interval 4-60; it reads FKVVHTICPYCGTGCGIDLVVKDGKVVDSHPFKRHPVNEGKVCIKGNYCYEFVHSED. C11, C14, C18, and C46 together coordinate [4Fe-4S] cluster. Position 133 (U133) is a non-standard amino acid, selenocysteine.

This sequence belongs to the prokaryotic molybdopterin-containing oxidoreductase family. In terms of assembly, dimer of an alpha (FdhA2) and a beta (FdhB2) subunit. The cofactor is [4Fe-4S] cluster. Requires Mo-bis(molybdopterin guanine dinucleotide) as cofactor. It depends on Zn(2+) as a cofactor.

The catalysed reaction is oxidized coenzyme F420-(gamma-L-Glu)(n) + formate + 2 H(+) = reduced coenzyme F420-(gamma-L-Glu)(n) + CO2. Catalyzes the oxidation of formate to carbon dioxide, with coenzyme F420 as the electron acceptor. In vitro can also use methyl viologen as electron acceptor. This Methanococcus maripaludis (strain DSM 14266 / JCM 13030 / NBRC 101832 / S2 / LL) protein is F420-dependent formate dehydrogenase 2 subunit alpha.